Here is a 378-residue protein sequence, read N- to C-terminus: Aminomethyltransferase (378 aa).

This sequence belongs to the GcvT family. In terms of assembly, the glycine cleavage system is composed of four proteins: P, T, L and H.

It catalyses the reaction N(6)-[(R)-S(8)-aminomethyldihydrolipoyl]-L-lysyl-[protein] + (6S)-5,6,7,8-tetrahydrofolate = N(6)-[(R)-dihydrolipoyl]-L-lysyl-[protein] + (6R)-5,10-methylene-5,6,7,8-tetrahydrofolate + NH4(+). The glycine cleavage system catalyzes the degradation of glycine. The polypeptide is Aminomethyltransferase (Acidobacterium capsulatum (strain ATCC 51196 / DSM 11244 / BCRC 80197 / JCM 7670 / NBRC 15755 / NCIMB 13165 / 161)).